Reading from the N-terminus, the 300-residue chain is Protoheme IX farnesyltransferase (300 aa).

The next 9 membrane-spanning stretches (helical) occupy residues 24–44 (VTQL…PGMV), 48–68 (VLIG…AINC), 94–114 (PQIL…LYTF), 118–138 (LTMW…TLLL), 146–166 (IVIG…AVTG), 172–192 (AWIL…VLAL), 217–237 (LHIL…FISG), 239–259 (SGAV…AYAW), and 278–298 (IVYL…RPLL).

Belongs to the UbiA prenyltransferase family. Protoheme IX farnesyltransferase subfamily.

It is found in the cell inner membrane. The enzyme catalyses heme b + (2E,6E)-farnesyl diphosphate + H2O = Fe(II)-heme o + diphosphate. Its pathway is porphyrin-containing compound metabolism; heme O biosynthesis; heme O from protoheme: step 1/1. Functionally, converts heme B (protoheme IX) to heme O by substitution of the vinyl group on carbon 2 of heme B porphyrin ring with a hydroxyethyl farnesyl side group. In Burkholderia vietnamiensis (strain G4 / LMG 22486) (Burkholderia cepacia (strain R1808)), this protein is Protoheme IX farnesyltransferase.